Reading from the N-terminus, the 273-residue chain is MSTMTDRYAVIGNPIAHSKSPDIHARFAAQTQQDMRYEPLLAPLDGFLATVQDFVRNGGKGVNVTVPFKLEAYALATTLTERARAAGAVNTLKFDGADMLGDNTDGFGLVSDIVRNAKVEIANKSVLLLGAGGAARGVLLPLLHEQPARLVLANRTHSKALDLAHRFAAQPRLKVSTFADLDDSFDIVINATAASLASEVPPISPRVFTAHTLAYDMMYGAQPTAFMRFAAQHGATVRDGLGMLVEQAAESFYLWRGVRPETAAVFAELRAQL.

Shikimate contacts are provided by residues 18-20 and T65; that span reads SKS. The Proton acceptor role is filled by K69. E81 is an NADP(+) binding site. 2 residues coordinate shikimate: N90 and D105. Residues 130 to 134, 154 to 159, and M217 each bind NADP(+); these read GAGGA and NRTHSK. Position 219 (Y219) interacts with shikimate. Position 240 (G240) interacts with NADP(+).

This sequence belongs to the shikimate dehydrogenase family. As to quaternary structure, homodimer.

It carries out the reaction shikimate + NADP(+) = 3-dehydroshikimate + NADPH + H(+). The protein operates within metabolic intermediate biosynthesis; chorismate biosynthesis; chorismate from D-erythrose 4-phosphate and phosphoenolpyruvate: step 4/7. In terms of biological role, involved in the biosynthesis of the chorismate, which leads to the biosynthesis of aromatic amino acids. Catalyzes the reversible NADPH linked reduction of 3-dehydroshikimate (DHSA) to yield shikimate (SA). This Herminiimonas arsenicoxydans protein is Shikimate dehydrogenase (NADP(+)).